We begin with the raw amino-acid sequence, 845 residues long: Protein kintoun (845 aa).

Residues 362–382 (SKEQAQMHETLRHFSREDSGV) are compositionally biased toward basic and acidic residues. 3 disordered regions span residues 362–420 (SKEQ…PVRH), 575–691 (QALK…SMSD), and 773–845 (AQHR…EMDD). The residue at position 380 (Ser380) is a Phosphoserine. Positions 391–400 (PVEEDPDGEL) are enriched in acidic residues. The segment covering 584 to 593 (GTKEEEKENQ) has biased composition (basic and acidic residues). Residues 611–622 (KPGKKQRKRNKK) show a composition bias toward basic residues. The segment covering 640–671 (LTKNSELQPKSTFNLPQRKQRSYSECNDSTGG) has biased composition (polar residues). Ser779 is subject to Phosphoserine. The span at 794 to 804 (LKQQENQSRNC) shows a compositional bias: polar residues.

This sequence belongs to the PIH1 family. Kintoun subfamily. In terms of assembly, interacts with Pp1alpha-96A, Pp1-87B, Pp1-13C and flw.

It localises to the cytoplasm. Functionally, required for cytoplasmic pre-assembly of axonemal dyneins, thereby playing a central role in motility in cilia and flagella. Involved in pre-assembly of dynein arm complexes in the cytoplasm before intraflagellar transport loads them for the ciliary compartment. This chain is Protein kintoun, found in Drosophila erecta (Fruit fly).